Reading from the N-terminus, the 354-residue chain is Stimulator of interferon genes protein 3 (354 aa).

4 helical membrane-spanning segments follow: residues 20–40 (VTFASVVIAIISGALLVFALW), 48–68 (INFVFFATALLMLSVIIGELI), 101–121 (YGSCILAVGTTSVLFVCYALL), and 132–152 (YGIFFILNCFVIPQLVFIVGI). 3',3'-cGAMP-binding residues include Asn-178, Tyr-183, Arg-250, Ile-251, Lys-253, Glu-272, Ser-275, and Asn-276.

Belongs to the STING family.

The protein localises to the membrane. Facilitator of innate immune signaling that acts as a sensor of second messenger signals produced by cyclic GMP-AMP synthase-like receptors (cGLRs) and promotes the production of type I interferon. Innate immune response is triggered in response to nucleotides from viruses and bacteria delivered to the cytoplasm. Acts by binding cyclic dinucleotides: recognizes and binds cyclic 3'-3' linked cGAMP (3'-3'-cGAMP), cyclic di-AMP (3',3'-c-di-AMP) and cyclic di-GMP (3',3'-c-di-GMP) second messengers produced by cGLRs in response to nucleotides in the cytosol, such as double-stranded RNA (dsRNA). Upon binding to 3'-3'-cGAMP, 3',3'-c-di-AMP or 3',3'-c-di-GMP, oligomerizes and promotes the recruitment and subsequent activation of the transcription factor IRF3 to induce expression of type I interferon. This is Stimulator of interferon genes protein 3 from Stylophora pistillata (Smooth cauliflower coral).